The primary structure comprises 141 residues: MAVERTLSIIKPDAVAKNIIGEIYNRFEKAGLKIVAARMVHLSREQAEGFYAVHKERPFFNDLVGFMISGPVMVQVLEGENAIVKNREIMGATNPAEAAAGTLRHDYAETIDANAVHGSDAPETAKQEIEFFFKADELCSR.

Positions 11, 59, 87, 93, 104, and 114 each coordinate ATP. The active-site Pros-phosphohistidine intermediate is the His-117.

It belongs to the NDK family. In terms of assembly, homotetramer. Mg(2+) is required as a cofactor.

Its subcellular location is the cytoplasm. It catalyses the reaction a 2'-deoxyribonucleoside 5'-diphosphate + ATP = a 2'-deoxyribonucleoside 5'-triphosphate + ADP. It carries out the reaction a ribonucleoside 5'-diphosphate + ATP = a ribonucleoside 5'-triphosphate + ADP. Functionally, major role in the synthesis of nucleoside triphosphates other than ATP. The ATP gamma phosphate is transferred to the NDP beta phosphate via a ping-pong mechanism, using a phosphorylated active-site intermediate. This is Nucleoside diphosphate kinase from Alkalilimnicola ehrlichii (strain ATCC BAA-1101 / DSM 17681 / MLHE-1).